We begin with the raw amino-acid sequence, 339 residues long: Histidine protein methyltransferase 1 (339 aa).

Phosphoserine occurs at positions 333 and 338.

The protein belongs to the methyltransferase superfamily. METTL18 family.

It localises to the cytoplasm. The protein resides in the nucleus. The enzyme catalyses L-histidyl-[protein] + S-adenosyl-L-methionine = N(tele)-methyl-L-histidyl-[protein] + S-adenosyl-L-homocysteine + H(+). Its function is as follows. Protein-histidine N-methyltransferase that mediates methylation of target protein on His residues. The sequence is that of Histidine protein methyltransferase 1 from Schizosaccharomyces pombe (strain 972 / ATCC 24843) (Fission yeast).